We begin with the raw amino-acid sequence, 375 residues long: Peroxisomal targeting signal 2 receptor (375 aa).

WD repeat units follow at residues Leu58 to Asp89, Glu102 to Ser133, Lys172 to Asp203, His218 to Asp249, Ala281 to Arg312, and Gln340 to Asn372.

It belongs to the WD repeat peroxin-7 family. As to quaternary structure, interacts with PEX21.

It localises to the cytoplasm. Its subcellular location is the cytosol. The protein resides in the peroxisome matrix. Its function is as follows. Receptor required for the peroxisomal import of proteins containing a C-terminal PTS2-type peroxisomal targeting signal, such as 3-oxoacyl-CoA thiolase. Specifically binds to cargo proteins containing a PTS2 peroxisomal targeting signal in the cytosol. Cargo protein-binding triggers interaction with PEX21 and formation of a ternary complex composed of PEX21 and PEX7 along with PTS2-containing cargo proteins, which is tranlocated into peroxisomes by passing through the PEX13-PEX14 docking complex. The chain is Peroxisomal targeting signal 2 receptor from Saccharomyces cerevisiae (strain ATCC 204508 / S288c) (Baker's yeast).